Consider the following 260-residue polypeptide: Acetylglutamate kinase (260 aa).

Residues 45-46, arginine 67, and asparagine 159 each bind substrate; that span reads GG.

Belongs to the acetylglutamate kinase family. ArgB subfamily.

Its subcellular location is the cytoplasm. The catalysed reaction is N-acetyl-L-glutamate + ATP = N-acetyl-L-glutamyl 5-phosphate + ADP. The protein operates within amino-acid biosynthesis; L-arginine biosynthesis; N(2)-acetyl-L-ornithine from L-glutamate: step 2/4. Its function is as follows. Catalyzes the ATP-dependent phosphorylation of N-acetyl-L-glutamate. The sequence is that of Acetylglutamate kinase from Aliivibrio fischeri (strain ATCC 700601 / ES114) (Vibrio fischeri).